The sequence spans 185 residues: Elongation factor P (185 aa).

This sequence belongs to the elongation factor P family.

Its subcellular location is the cytoplasm. It functions in the pathway protein biosynthesis; polypeptide chain elongation. Functionally, involved in peptide bond synthesis. Stimulates efficient translation and peptide-bond synthesis on native or reconstituted 70S ribosomes in vitro. Probably functions indirectly by altering the affinity of the ribosome for aminoacyl-tRNA, thus increasing their reactivity as acceptors for peptidyl transferase. This Pseudothermotoga lettingae (strain ATCC BAA-301 / DSM 14385 / NBRC 107922 / TMO) (Thermotoga lettingae) protein is Elongation factor P.